A 192-amino-acid polypeptide reads, in one-letter code: SRP-independent targeting protein 2 homolog (192 aa).

2 helical membrane passes run 16–36 and 102–122; these read ILTFMLAADLIVNVLFWILRF and WILIFLAALTSVKVFAFYLLV. A disordered region spans residues 149-192; sequence LNQPPQQQQQQQQQQHQQHATPSEPVLSKRQQKLRKKAAKYSRP. The segment covering 151–167 has biased composition (low complexity); sequence QPPQQQQQQQQQQHQQH. Positions 178-192 are enriched in basic residues; sequence RQQKLRKKAAKYSRP.

This sequence belongs to the TMEM208 family.

The protein localises to the endoplasmic reticulum membrane. Its function is as follows. May function in a SRP (signal recognition particle) and GET (guided entry of tail-anchored proteins) independent pathway for targeting a broad range of substrate proteins to the endoplasmic reticulum. Has a role in meiosis. This Schizosaccharomyces pombe (strain 972 / ATCC 24843) (Fission yeast) protein is SRP-independent targeting protein 2 homolog.